The sequence spans 475 residues: Ribulose bisphosphate carboxylase large chain (475 aa).

Positions 1–2 are excised as a propeptide; the sequence is MS. At Pro3 the chain carries N-acetylproline. Residue Lys14 is modified to N6,N6,N6-trimethyllysine. Substrate is bound by residues Asn123 and Thr173. Lys175 serves as the catalytic Proton acceptor. Lys177 contributes to the substrate binding site. 3 residues coordinate Mg(2+): Lys201, Asp203, and Glu204. Residue Lys201 is modified to N6-carboxylysine. His294 serves as the catalytic Proton acceptor. Substrate-binding residues include Arg295, His327, and Ser379.

This sequence belongs to the RuBisCO large chain family. Type I subfamily. Heterohexadecamer of 8 large chains and 8 small chains. The cofactor is Mg(2+).

Its subcellular location is the plastid. The protein localises to the chloroplast. The catalysed reaction is 2 (2R)-3-phosphoglycerate + 2 H(+) = D-ribulose 1,5-bisphosphate + CO2 + H2O. It catalyses the reaction D-ribulose 1,5-bisphosphate + O2 = 2-phosphoglycolate + (2R)-3-phosphoglycerate + 2 H(+). RuBisCO catalyzes two reactions: the carboxylation of D-ribulose 1,5-bisphosphate, the primary event in carbon dioxide fixation, as well as the oxidative fragmentation of the pentose substrate in the photorespiration process. Both reactions occur simultaneously and in competition at the same active site. This chain is Ribulose bisphosphate carboxylase large chain, found in Coleochaete orbicularis (Charophycean green alga).